Consider the following 177-residue polypeptide: Inner membrane-spanning protein YciB (177 aa).

5 helical membrane-spanning segments follow: residues 22 to 42 (IFIASGSLIVISGLICIIHWI), 50 to 70 (ISLFSFLSVFFFGSLTIFFHN), 76 to 96 (WKITIIYIIFSLVLLISQFFT), 121 to 141 (FIWSLFFLFCAILNIYIAYYF), and 149 to 169 (FKVFGFTSLTFFLILITSIYI).

It belongs to the YciB family.

The protein localises to the cell inner membrane. Plays a role in cell envelope biogenesis, maintenance of cell envelope integrity and membrane homeostasis. The polypeptide is Inner membrane-spanning protein YciB (Buchnera aphidicola subsp. Acyrthosiphon pisum (strain 5A)).